Here is a 267-residue protein sequence, read N- to C-terminus: 4-hydroxy-tetrahydrodipicolinate reductase (267 aa).

NAD(+)-binding positions include 8-13 (GAAGRM) and Glu34. Arg35 contacts NADP(+). Residues 98-100 (GST) and 122-125 (APNM) contribute to the NAD(+) site. His155 serves as the catalytic Proton donor/acceptor. (S)-2,3,4,5-tetrahydrodipicolinate is bound at residue His156. Lys159 functions as the Proton donor in the catalytic mechanism. A (S)-2,3,4,5-tetrahydrodipicolinate-binding site is contributed by 165–166 (GT).

Belongs to the DapB family.

It is found in the cytoplasm. The enzyme catalyses (S)-2,3,4,5-tetrahydrodipicolinate + NAD(+) + H2O = (2S,4S)-4-hydroxy-2,3,4,5-tetrahydrodipicolinate + NADH + H(+). The catalysed reaction is (S)-2,3,4,5-tetrahydrodipicolinate + NADP(+) + H2O = (2S,4S)-4-hydroxy-2,3,4,5-tetrahydrodipicolinate + NADPH + H(+). Its pathway is amino-acid biosynthesis; L-lysine biosynthesis via DAP pathway; (S)-tetrahydrodipicolinate from L-aspartate: step 4/4. Its function is as follows. Catalyzes the conversion of 4-hydroxy-tetrahydrodipicolinate (HTPA) to tetrahydrodipicolinate. In Geotalea daltonii (strain DSM 22248 / JCM 15807 / FRC-32) (Geobacter daltonii), this protein is 4-hydroxy-tetrahydrodipicolinate reductase.